A 157-amino-acid chain; its full sequence is RNA-binding protein 3 (157 aa).

Positions 6–84 constitute an RRM domain; that stretch reads GKLFVGGLNF…RQIRVDHAGK (79 aa). Arg-47 carries the post-translational modification Omega-N-methylarginine. Positions 81 to 157 are disordered; sequence HAGKSARGTR…GGNYRDNYDN (77 aa). An Asymmetric dimethylarginine; alternate modification is found at Arg-105. Dimethylated arginine; in A2780 ovarian carcinoma cell line is present on Arg-105. Arg-105 carries the omega-N-methylarginine; alternate modification. Residues 105–114 show a composition bias toward gly residues; sequence RGGGDQGYGS. An omega-N-methylarginine mark is found at Arg-121 and Arg-131. Ser-147 carries the phosphoserine modification. The residue at position 155 (Tyr-155) is a Phosphotyrosine.

Interacts with RPL4. Associates with the 60S ribosomal subunits in an RNA-independent manner. Associates with ribosomes. Arg-105 is dimethylated, probably to asymmetric dimethylarginine. Post-translationally, phosphorylated.

Its subcellular location is the nucleus. The protein resides in the cytoplasm. It is found in the cell projection. It localises to the dendrite. Its function is as follows. Cold-inducible mRNA binding protein that enhances global protein synthesis at both physiological and mild hypothermic temperatures. Reduces the relative abundance of microRNAs, when overexpressed. Enhances phosphorylation of translation initiation factors and active polysome formation. In Homo sapiens (Human), this protein is RNA-binding protein 3 (RBM3).